Reading from the N-terminus, the 155-residue chain is 17.6 kDa class II heat shock protein (155 aa).

Positions 38–155 (DAKAMAATPA…KPKTIQVQVA (118 aa)) constitute a sHSP domain.

It belongs to the small heat shock protein (HSP20) family. In terms of assembly, may form oligomeric structures.

It localises to the cytoplasm. In Arabidopsis thaliana (Mouse-ear cress), this protein is 17.6 kDa class II heat shock protein (HSP17.6).